A 763-amino-acid chain; its full sequence is Protein translocase subunit SecA 2 (763 aa).

ATP is bound by residues Gln-83, 101-105, and Asp-490; that span reads GEGKT.

The protein belongs to the SecA family. Monomer and homodimer. Part of the essential Sec protein translocation apparatus which comprises SecA, SecYEG and auxiliary proteins SecDF. Other proteins may also be involved.

It is found in the cell membrane. The protein resides in the cytoplasm. The enzyme catalyses ATP + H2O + cellular proteinSide 1 = ADP + phosphate + cellular proteinSide 2.. Its function is as follows. Part of the Sec protein translocase complex. Interacts with the SecYEG preprotein conducting channel. Has a central role in coupling the hydrolysis of ATP to the transfer of proteins into and across the cell membrane, serving as an ATP-driven molecular motor driving the stepwise translocation of polypeptide chains across the membrane. This Corynebacterium glutamicum (strain ATCC 13032 / DSM 20300 / JCM 1318 / BCRC 11384 / CCUG 27702 / LMG 3730 / NBRC 12168 / NCIMB 10025 / NRRL B-2784 / 534) protein is Protein translocase subunit SecA 2.